The sequence spans 346 residues: 3-dehydroquinate synthase (346 aa).

NAD(+) contacts are provided by residues 62–67 (DGEQYK), 96–100 (GVISD), 120–121 (TT), Lys133, and Lys142. Positions 175, 234, and 251 each coordinate Zn(2+).

The protein belongs to the sugar phosphate cyclases superfamily. Dehydroquinate synthase family. The cofactor is Co(2+). It depends on Zn(2+) as a cofactor. NAD(+) is required as a cofactor.

It localises to the cytoplasm. It carries out the reaction 7-phospho-2-dehydro-3-deoxy-D-arabino-heptonate = 3-dehydroquinate + phosphate. It functions in the pathway metabolic intermediate biosynthesis; chorismate biosynthesis; chorismate from D-erythrose 4-phosphate and phosphoenolpyruvate: step 2/7. Catalyzes the conversion of 3-deoxy-D-arabino-heptulosonate 7-phosphate (DAHP) to dehydroquinate (DHQ). This Campylobacter fetus subsp. fetus (strain 82-40) protein is 3-dehydroquinate synthase.